The chain runs to 457 residues: tRNA (guanine(37)-N(1))-methyltransferase (457 aa).

S-adenosyl-L-methionine-binding positions include H240, 278-279 (DL), 306-307 (DG), and N338.

The protein belongs to the class I-like SAM-binding methyltransferase superfamily. TRM5/TYW2 family. As to quaternary structure, monomer.

The protein localises to the mitochondrion matrix. Its subcellular location is the nucleus. The protein resides in the cytoplasm. It carries out the reaction guanosine(37) in tRNA + S-adenosyl-L-methionine = N(1)-methylguanosine(37) in tRNA + S-adenosyl-L-homocysteine + H(+). In terms of biological role, specifically methylates the N1 position of guanosine-37 in various cytoplasmic and mitochondrial tRNAs. Methylation is not dependent on the nature of the nucleoside 5' of the target nucleoside. This is the first step in the biosynthesis of wybutosine (yW), a modified base adjacent to the anticodon of tRNAs and required for accurate decoding. This chain is tRNA (guanine(37)-N(1))-methyltransferase, found in Drosophila melanogaster (Fruit fly).